The primary structure comprises 243 residues: tRNA (guanine-N(1)-)-methyltransferase (243 aa).

S-adenosyl-L-methionine is bound by residues Gly-108 and 127–132 (LGDFVL).

This sequence belongs to the RNA methyltransferase TrmD family. In terms of assembly, homodimer.

The protein localises to the cytoplasm. The catalysed reaction is guanosine(37) in tRNA + S-adenosyl-L-methionine = N(1)-methylguanosine(37) in tRNA + S-adenosyl-L-homocysteine + H(+). In terms of biological role, specifically methylates guanosine-37 in various tRNAs. The sequence is that of tRNA (guanine-N(1)-)-methyltransferase from Streptococcus pyogenes serotype M5 (strain Manfredo).